Reading from the N-terminus, the 356-residue chain is MIRISVDVMGGDYGPEVTIAGAAIAQKHLPKVHFLFYGIDEAVEPVLKKYPDLLSVSHFYATESYTRMDEKPSQALRVGRGKSSMWHAIEAVKNGEADSCVSAGNTGALMAMSYFCLKMIAETERPGIAGIWPTLRNDSIVLDIGATIGASANQLVDFAVMGASMFRSLYNVEKTTIGLLNVGVEEVKGLDEIKKAGIILSKVQFEGLEYKGFIEGNDIGKGMVDVVVTEGFSGNIALKVAEGTAQQISELLKSAMRSSIFSRFGYLLSQSAFRKLKQKIDLDRVNGGVLLGLNGIVVKSHGSASASDFSSAIRIGYEMVNNELLKKIITDLQCFHEKKAIFLNNKGESVIDKETI.

It belongs to the PlsX family. Homodimer. Probably interacts with PlsY.

It is found in the cytoplasm. The enzyme catalyses a fatty acyl-[ACP] + phosphate = an acyl phosphate + holo-[ACP]. It functions in the pathway lipid metabolism; phospholipid metabolism. Functionally, catalyzes the reversible formation of acyl-phosphate (acyl-PO(4)) from acyl-[acyl-carrier-protein] (acyl-ACP). This enzyme utilizes acyl-ACP as fatty acyl donor, but not acyl-CoA. The sequence is that of Phosphate acyltransferase from Bartonella bacilliformis (strain ATCC 35685 / KC583 / Herrer 020/F12,63).